Reading from the N-terminus, the 492-residue chain is Malonyl-CoA decarboxylase, mitochondrial (492 aa).

Residues 1-28 (MRGLGPGLRARRLLPLRSPPRPPGPRGR) are disordered. Residues 1–38 (MRGLGPGLRARRLLPLRSPPRPPGPRGRRLCGGLAASA) constitute a mitochondrion transit peptide. The tract at residues 39-189 (MDELLRRAVP…VLKSMLSEWF (151 aa)) is alpha-helical domain. Lys58 carries the N6-acetyllysine modification. Lys167 bears the N6-acetyllysine; alternate mark. Lys167 carries the N6-succinyllysine; alternate modification. Residues 190 to 492 (SSGFLNLERV…VAQFQNNSKL (303 aa)) form a catalytic domain region. Lys210 is modified (N6-acetyllysine). Lys221 bears the N6-succinyllysine mark. 298–304 (QGVELGT) is a malonyl-CoA binding site. At Lys316 the chain carries N6-acetyllysine. Ser328 contacts malonyl-CoA. Ser328 serves as the catalytic Proton acceptor. Residue Lys385 is modified to N6-acetyllysine; alternate. Lys385 carries the post-translational modification N6-succinyllysine; alternate. Lys388 bears the N6-acetyllysine mark. His422 serves as a coordination point for malonyl-CoA. Residue His422 is the Proton donor of the active site. An N6-acetyllysine mark is found at Lys441 and Lys471. The Microbody targeting signal signature appears at 490–492 (SKL).

Homotetramer. Dimer of dimers. The two subunits within a dimer display conformational differences suggesting that at any given moment, only one of the two subunits is competent for malonyl-CoA binding and catalytic activity. Under oxidizing conditions, can form disulfide-linked homotetramers (in vitro). Associates with the peroxisomal targeting signal receptor PEX5. Interchain disulfide bonds may form in peroxisomes (Potential). Interchain disulfide bonds are not expected to form in the reducing environment of the cytoplasm and mitochondria. Post-translationally, acetylation at Lys-471 activates malonyl-CoA decarboxylase activity. Deacetylation at Lys-471 by SIRT4 represses activity, leading to promote lipogenesis.

The protein localises to the cytoplasm. It localises to the mitochondrion matrix. The protein resides in the peroxisome. It is found in the peroxisome matrix. The catalysed reaction is malonyl-CoA + H(+) = acetyl-CoA + CO2. The protein operates within metabolic intermediate biosynthesis; acetyl-CoA biosynthesis; acetyl-CoA from malonyl-CoA: step 1/1. With respect to regulation, malonyl-CoA decarboxylase activity does not require any cofactors or divalent metal ions. Functionally, catalyzes the conversion of malonyl-CoA to acetyl-CoA. In the fatty acid biosynthesis MCD selectively removes malonyl-CoA and thus assures that methyl-malonyl-CoA is the only chain elongating substrate for fatty acid synthase and that fatty acids with multiple methyl side chains are produced. In peroxisomes it may be involved in degrading intraperoxisomal malonyl-CoA, which is generated by the peroxisomal beta-oxidation of odd chain-length dicarboxylic fatty acids. Plays a role in the metabolic balance between glucose and lipid oxidation in muscle independent of alterations in insulin signaling. Plays a role in controlling the extent of ischemic injury by promoting glucose oxidation. The sequence is that of Malonyl-CoA decarboxylase, mitochondrial from Mus musculus (Mouse).